The following is a 37-amino-acid chain: Large ribosomal subunit protein bL36c (37 aa).

Belongs to the bacterial ribosomal protein bL36 family.

It localises to the plastid. The protein resides in the chloroplast. The protein is Large ribosomal subunit protein bL36c of Phaeodactylum tricornutum (strain CCAP 1055/1).